We begin with the raw amino-acid sequence, 1112 residues long: cGMP-inhibited 3',5'-cyclic phosphodiesterase 3B (1112 aa).

The segment covering 1–10 (MRRDERDAKA) has biased composition (basic and acidic residues). The tract at residues 1–25 (MRRDERDAKAMRSLQPPDGAGSPPE) is interaction with RAPGEF3. Residues 1–26 (MRRDERDAKAMRSLQPPDGAGSPPES) form a disordered region. Serine 13 carries the post-translational modification Phosphoserine. The next 6 membrane-spanning stretches (helical) occupy residues 88–108 (FVLA…AAWL), 117–137 (HSLS…CFLT), 152–172 (WWLL…WQWW), 192–212 (AAAG…TLAH), 220–240 (VLVL…LGSL), and 247–267 (LLSG…DHFF). Residue serine 295 is modified to Phosphoserine; by PKB/AKT1 or PKB/AKT2. 2 positions are modified to phosphoserine: serine 296 and serine 442. The interval 418–471 (EKGDRKLNKGLNRNSLPTPQLRRSSGTSGLLPVEQSSRWDRNNGKRPHQEFGIS) is disordered. Residues 428-445 (LNRNSLPTPQLRRSSGTS) are compositionally biased toward polar residues. The tract at residues 436–460 (PQLRRSSGTSGLLPVEQSSRWDRNN) is interaction with PIK3R6. Residues 454 to 466 (SRWDRNNGKRPHQ) are compositionally biased toward basic and acidic residues. Residues 651 to 1079 (TNIEQEVSLD…KIWKEIVEEE (429 aa)) form the PDEase domain. Catalysis depends on histidine 737, which acts as the Proton donor. Histidine 737 contributes to the AMP binding site. Residues histidine 741, histidine 821, aspartate 822, and aspartate 937 each coordinate Mg(2+). AMP contacts are provided by aspartate 822, aspartate 937, and glutamine 988. Acidic residues-rich tracts occupy residues 1017-1041 (EEDN…EEME) and 1103-1112 (QVIEEADEEE). Disordered regions lie at residues 1017–1051 (EEDN…PPRR) and 1092–1112 (ENSS…DEEE).

This sequence belongs to the cyclic nucleotide phosphodiesterase family. PDE3 subfamily. In terms of assembly, homodimer. Interacts with PIK3CG; regulates PDE3B activity and thereby cAMP levels in cells. Interacts with RAPGEF3 and PIK3R6; form a signaling complex that regulates phosphatidylinositol 3-kinase gamma in angiogenesis. Interacts with ABHD15; this interaction regulates PDE3B's stability and expression and, thereby, impacts the antilipolytic action of insulin. Requires Mg(2+) as cofactor. Mn(2+) serves as cofactor. Post-translationally, phosphorylation at Ser-295 mediates insulin-induced activation of PDE3B. In terms of tissue distribution, abundant in adipose tissues.

The protein localises to the membrane. The enzyme catalyses a nucleoside 3',5'-cyclic phosphate + H2O = a nucleoside 5'-phosphate + H(+). It catalyses the reaction 3',5'-cyclic AMP + H2O = AMP + H(+). It carries out the reaction 3',5'-cyclic GMP + H2O = GMP + H(+). With respect to regulation, inhibited by cGMP. In terms of biological role, cyclic nucleotide phosphodiesterase with a dual-specificity for the second messengers cAMP and cGMP, which are key regulators of many important physiological process. Regulates angiogenesis by inhibiting the cAMP-dependent guanine nucleotide exchange factor RAPGEF3 and downstream phosphatidylinositol 3-kinase gamma-mediated signaling. Controls cardiac contractility by reducing cAMP concentration in cardiocytes. The chain is cGMP-inhibited 3',5'-cyclic phosphodiesterase 3B from Homo sapiens (Human).